Here is a 414-residue protein sequence, read N- to C-terminus: Chromobox protein homolog 6 (414 aa).

In terms of domain architecture, Chromo spans 11–69 (FAAESIIKRRIRKGRIEYLVKWKGWAIKYSTWEPEENILDSRLIAAFEQKERERELYGP). S107 bears the Phosphoserine mark. 3 disordered regions span residues 127–152 (HRMS…PISP), 267–308 (APFD…VPNW), and 344–365 (ALEP…PEMS). The segment covering 267–287 (APFDAHSSSSSGCPSPTLQSS) has biased composition (low complexity).

As to quaternary structure, component of a PRC1-like complex. Distinct PRC1-like core complexes are composed of a RING1 subunit (RING1B or RING1A), one of the six PCGF proteins (PCGF1-6), one PHC protein (PHC1-3) and one of the CBX proteins (CBX2, CBX4, CBX6, CBX7 or CBX8). Interacts with PCGF1, PCGF2, PCGF3, BMI1, PCGF5, PCGF6, RING1 and RNF2. May interact with H3C15 and H3C1. Interacts (via chromodomain) with single-stranded RNA (ssRNA). Post-translationally, ubiquitinated. Ubiquitination regulates the function of the Polycomb group (PcG) multiprotein PRC1-like complex. Deubiquitinated by USP26. In terms of tissue distribution, expressed in mouse embryonic stem cells.

The protein resides in the nucleus. The protein localises to the chromosome. In terms of biological role, component of a Polycomb group (PcG) multiprotein PRC1-like complex, a complex class required to maintain the transcriptionally repressive state of many genes, including Hox genes, throughout development. PcG PRC1 complex acts via chromatin remodeling and modification of histones; it mediates monoubiquitination of histone H2A 'Lys-119', rendering chromatin heritably changed in its expressibility. Possibly contributes to the target selectivity of the PRC1 complex by binding specific regions of chromatin. Recruitment to chromatin might occur in an H3K27me3-independent fashion. May have a PRC1-independent function in embryonic stem cells. This is Chromobox protein homolog 6 (Cbx6) from Mus musculus (Mouse).